A 572-amino-acid polypeptide reads, in one-letter code: MQQVIPAPRVQVTQPYAGQKPGTSGLRKKVTEATQPHYLENFVQSIFNTLRKDELKPKNVLFVGGDGRYFNRQAIFSIIRLAYANDISEVHVGQAGLMSTPASSHYIRKVNEEVGNCIGGIILTASHNPGGKEHGDFGIKFNVRTGAPAPEDFTDQIYTHTTKIKEYLTVDYEFEKHINLDQIGVYKFEGTRLEKSHFEVKVVDTVQDYTSLMQKLFDFDLLKGLFSNKDFTFSFDGMHGVAGPYAKHIFGTLLGCSKESLLNCDPSEDFGGGHPDPNLTYAHDLVELLDIHKKKDVGAVPQFGAACDGDADRNMILGRQFFVTPSDSLAVIAANANLIFKNGLLGAARSMPTSGALDKVAAKNGIKLFETPTGWKFFGNLMDAGLINLCGEESFGTGSNHIREKDGIWAVLAWLTILAHKNKNTDHFVTVEEIVTQYWQQFGRNYYSRYDYEQVDSAGANKMMEHLKTKFQYFEQLKQGNKADIYDYVDPVDQSVSKNQGVRFVFGDGSRIIFRLSGTGSVGATIRIYFEQFEQQEIQHETATALANIIKLGLEISDIAQFTGRNEPTVIT.

Substrate is bound by residues T23, R27, S126–H127, and K140. Residue S126 is the Phosphoserine intermediate of the active site. Mg(2+) is bound at residue S126. D308, D310, and D312 together coordinate Mg(2+). Residues D312–R313, T373, E392–S394, K405, and R527 contribute to the substrate site.

Belongs to the phosphohexose mutase family. Mg(2+) is required as a cofactor. Phosphorylated via a calcium-dependent protein kinase.

It is found in the cytoplasm. The enzyme catalyses alpha-D-glucose 1-phosphate = alpha-D-glucose 6-phosphate. In terms of biological role, may be involved in membrane fusion in exocytosis. The chain is Phosphoglucomutase-2 (pp63-2) from Paramecium tetraurelia.